Here is a 287-residue protein sequence, read N- to C-terminus: ATP synthase gamma chain (287 aa).

This sequence belongs to the ATPase gamma chain family. As to quaternary structure, F-type ATPases have 2 components, CF(1) - the catalytic core - and CF(0) - the membrane proton channel. CF(1) has five subunits: alpha(3), beta(3), gamma(1), delta(1), epsilon(1). CF(0) has three main subunits: a, b and c.

Its subcellular location is the cell inner membrane. Its function is as follows. Produces ATP from ADP in the presence of a proton gradient across the membrane. The gamma chain is believed to be important in regulating ATPase activity and the flow of protons through the CF(0) complex. The chain is ATP synthase gamma chain from Enterobacter sp. (strain 638).